A 663-amino-acid polypeptide reads, in one-letter code: Zinc finger protein GLI2 (663 aa).

Residues 159–186 (ISSNSNCISDSSQSKQSSESAVSSTVNP) are disordered. The segment covering 160–182 (SSNSNCISDSSQSKQSSESAVSS) has biased composition (low complexity). 5 C2H2-type zinc fingers span residues 234-259 (TNCHWEGCTKEYDTQEQLVHHINNDH), 267-294 (FVCRWQDCTREQKPFKAQYMLVVHMRRH), 300-324 (HKCTFEGCSKAYSRLENLKTHLRSH), 330-355 (YVCEHEGCNKAFSNASDRAKHQNRTH), and 361-386 (YVCKIPGCTKRYTDPSSLRKHVKTVH). 4 disordered regions span residues 374–440 (DPSS…MEDC), 452–481 (VMCQSSPGGQSSCSSEPSPLGSTNNNDSGV), 544–578 (CSWVNPAPQGRNTKLPPISGNGSILENSGGSSRTL), and 619–663 (SGIS…DIKL). A compositionally biased stretch (basic and acidic residues) spans 386-402 (HGPDAHVTKKQRNDVHP). Over residues 456–473 (SSPGGQSSCSSEPSPLGS) the composition is skewed to low complexity. Composition is skewed to polar residues over residues 563–578 (GNGSILENSGGSSRTL) and 619–647 (SGISPYFSSRRSSEASQLGHRPNNTSSAD).

This sequence belongs to the GLI C2H2-type zinc-finger protein family.

The protein localises to the nucleus. Its subcellular location is the cytoplasm. It is found in the cell projection. It localises to the cilium. Functions as a transcription regulator in the hedgehog (Hh) pathway. Functions as a transcriptional activator. May also function as transcriptional repressor. Binds to the DNA sequence 5'-GAACCACCCA-3'. Is involved in the smoothened (SHH) signaling pathway. Required for normal skeleton development. In Gallus gallus (Chicken), this protein is Zinc finger protein GLI2.